A 40-amino-acid polypeptide reads, in one-letter code: Large ribosomal subunit protein bL36 (40 aa).

Belongs to the bacterial ribosomal protein bL36 family.

The polypeptide is Large ribosomal subunit protein bL36 (Corynebacterium glutamicum (strain R)).